Reading from the N-terminus, the 305-residue chain is Cytoplasmic envelopment protein 1 (305 aa).

This sequence belongs to the herpesviridae cytoplasmic envelopment protein 1 family.

It is found in the virion. The protein resides in the virion tegument. It localises to the host cytoplasm. The protein localises to the host Golgi apparatus. In terms of biological role, plays a critical role in cytoplasmic virus egress. Participates in the final step of tegumentation and envelope acquisition within the host cytoplasm. In Gallus gallus (Chicken), this protein is Cytoplasmic envelopment protein 1 (MDV019).